We begin with the raw amino-acid sequence, 450 residues long: Cyclic GMP-AMP phosphodiesterase SMPDL3A (450 aa).

An N-terminal signal peptide occupies residues 1 to 22 (MARLGALVCCLLAAWHCRPGLG). Zn(2+) is bound by residues aspartate 42 and histidine 44. Cysteines 59 and 78 form a disulfide. Zn(2+) is bound at residue aspartate 107. Histidine 111 contributes to the ATP binding site. N-linked (GlcNAc...) asparagine glycans are attached at residues asparagine 124 and asparagine 128. Asparagine 148 contacts Zn(2+). Residues asparagine 148 and histidine 149 each coordinate ATP. N-linked (GlcNAc...) asparagine glycans are attached at residues asparagine 219 and asparagine 235. 3 residues coordinate Zn(2+): histidine 249, histidine 290, and histidine 292. N-linked (GlcNAc...) asparagine glycans are attached at residues asparagine 353 and asparagine 370. 2 disulfides stabilise this stretch: cysteine 417–cysteine 421 and cysteine 427–cysteine 440.

The protein belongs to the acid sphingomyelinase family. In terms of assembly, monomer. Homodimer; homodimerizes following 2',3'-cGAMP-binding. The cofactor is Zn(2+).

The protein localises to the secreted. It carries out the reaction 2',3'-cGAMP + H2O = 5'-pGpA(2'-5') + H(+). It catalyses the reaction 5'-pGpA(2'-5') + H2O = 5'-GpA(2'-5') + phosphate. The enzyme catalyses a ribonucleoside 5'-triphosphate + H2O = a ribonucleoside 5'-diphosphate + phosphate + H(+). The catalysed reaction is ATP + H2O = ADP + phosphate + H(+). In terms of biological role, cyclic-nucleotide phosphodiesterase that acts as a negative regulator of innate immunity by mediating degradation of 2',3'-cGAMP, thereby inhibiting the cGAS-STING signaling. Specifically linearizes 2',3'-cGAMP into 2'5'-bond pGpA and further hydrolyzes pGpA to produce GpA. Also has in vitro nucleotide phosphodiesterase activity with nucleoside triphosphates, such as ATP. Has in vitro activity with p-nitrophenyl-TMP. Has lower activity with nucleoside diphosphates, and no activity with nucleoside monophosphates. Has in vitro activity with CDP-choline, giving rise to CMP and phosphocholine. Has in vitro activity with CDP-ethanolamine. Does not have sphingomyelin phosphodiesterase activity. The chain is Cyclic GMP-AMP phosphodiesterase SMPDL3A (SMPDL3A) from Bos taurus (Bovine).